The following is an 88-amino-acid chain: Centromere protein W (88 aa).

It belongs to the CENP-W/WIP1 family. Heterodimer with CENPT; this dimer coassembles with CENPS-CENPX heterodimers at centromeres to form the tetrameric CENP-T-W-S-X complex, which is a subcomplex of the large constitutive centromere-associated network (CCAN, also known as the interphase centromere complex or ICEN). Interacts with NPM1. Highly expressed in ovary, liver, lung and pancreas and to a lower extent in breast and gastrointestinal tract cancers; such as those of the colon, rectum and stomach. Overexpressed in high grade breast invasive tumors. Expressed in many cancer cell types.

It is found in the nucleus. The protein resides in the chromosome. Its subcellular location is the centromere. The protein localises to the kinetochore. It localises to the nucleus matrix. It is found in the nucleolus. Functionally, component of the CENPA-NAC (nucleosome-associated) complex, a complex that plays a central role in assembly of kinetochore proteins, mitotic progression and chromosome segregation. The CENPA-NAC complex recruits the CENPA-CAD (nucleosome distal) complex and may be involved in incorporation of newly synthesized CENPA into centromeres. Part of a nucleosome-associated complex that binds specifically to histone H3-containing nucleosomes at the centromere, as opposed to nucleosomes containing CENPA. Component of the heterotetrameric CENP-T-W-S-X complex that binds and supercoils DNA, and plays an important role in kinetochore assembly. CENPW has a fundamental role in kinetochore assembly and function. It is one of the inner kinetochore proteins, with most further proteins binding downstream. Required for normal chromosome organization and normal progress through mitosis. This chain is Centromere protein W (CENPW), found in Homo sapiens (Human).